Here is a 65-residue protein sequence, read N- to C-terminus: Beta-toxin Tf4a (65 aa).

The LCN-type CS-alpha/beta domain maps to 2-63 (KEGYPADSKG…VWDSATNKCG (62 aa)). Disulfide bonds link Cys12-Cys62, Cys16-Cys38, Cys24-Cys43, and Cys28-Cys45. Position 62 is a cysteine amide (Cys62).

It belongs to the long (4 C-C) scorpion toxin superfamily. Sodium channel inhibitor family. Alpha subfamily. Expressed by the venom gland.

It localises to the secreted. Its function is as follows. Alpha toxins bind voltage-independently at site-3 of sodium channels (Nav) and inhibit the inactivation of the activated channels, thereby blocking neuronal transmission. This toxin is toxic to frogs but non-toxic to insect larvae (T.molitor), mammals (rats) and crustaceans (crabs) at the doses assayed. This is Beta-toxin Tf4a from Tityus fasciolatus (Central Brazilian scorpion).